The sequence spans 820 residues: DNA mismatch repair protein MutS (820 aa).

618-625 (GPNMAGKS) contacts ATP.

This sequence belongs to the DNA mismatch repair MutS family.

Functionally, this protein is involved in the repair of mismatches in DNA. It is possible that it carries out the mismatch recognition step. This protein has a weak ATPase activity. This chain is DNA mismatch repair protein MutS, found in Chlamydia trachomatis serovar A (strain ATCC VR-571B / DSM 19440 / HAR-13).